The following is a 372-amino-acid chain: Glutamate 5-kinase (372 aa).

Lys-14 contacts ATP. The substrate site is built by Ser-54, Asp-141, and Asn-153. ATP-binding positions include Thr-173–Asp-174 and Thr-215–Lys-221. A PUA domain is found at Arg-280–Asp-358.

This sequence belongs to the glutamate 5-kinase family.

Its subcellular location is the cytoplasm. It catalyses the reaction L-glutamate + ATP = L-glutamyl 5-phosphate + ADP. The protein operates within amino-acid biosynthesis; L-proline biosynthesis; L-glutamate 5-semialdehyde from L-glutamate: step 1/2. Functionally, catalyzes the transfer of a phosphate group to glutamate to form L-glutamate 5-phosphate. The sequence is that of Glutamate 5-kinase from Shewanella halifaxensis (strain HAW-EB4).